A 611-amino-acid polypeptide reads, in one-letter code: CRS2-associated factor 2, chloroplastic (611 aa).

Residues 1 to 58 constitute a chloroplast transit peptide; sequence MPPPPPQRPASSHVGRANLFSASPPPLSNRRYPHHRSLPLPPVSPRRRDPKKHSQQPS. The disordered stretch occupies residues 1–72; it reads MPPPPPQRPA…TDSGPTRTVT (72 aa). Polar residues predominate over residues 55–72; that stretch reads QQPSQEEPTDSGPTRTVT. CRM domains are found at residues 232–328 and 350–446; these read EPLT…TRPR and DGFT…YSKP. The tract at residues 486–509 is CRS2 binding; sequence KMFKLWKSAVDSSLALLLDDAEAN. The interval 554-578 is disordered; the sequence is MNDEPETSVAGNEEGQLEQSPDLRD.

As to quaternary structure, interacts with CRS2 and RNA. Part of large ribonucleo-protein complexes that include group IIB introns, CRS2 and CAF2.

Its subcellular location is the plastid. The protein resides in the chloroplast stroma. Required for the splicing of group IIB introns in chloroplasts. Forms splicing particles with CRS2. Interacts with RNA and confers intron specificity of the splicing particles. The polypeptide is CRS2-associated factor 2, chloroplastic (CAF2) (Zea mays (Maize)).